The following is a 129-amino-acid chain: Lysozyme C (129 aa).

A C-type lysozyme domain is found at 1 to 129 (KVFGRCELAA…VRVWIKGCRL (129 aa)). Intrachain disulfides connect C6/C127, C30/C115, C64/C80, and C76/C94. Catalysis depends on residues E35 and D52.

Belongs to the glycosyl hydrolase 22 family. In terms of assembly, monomer.

It localises to the secreted. The enzyme catalyses Hydrolysis of (1-&gt;4)-beta-linkages between N-acetylmuramic acid and N-acetyl-D-glucosamine residues in a peptidoglycan and between N-acetyl-D-glucosamine residues in chitodextrins.. In terms of biological role, lysozymes have primarily a bacteriolytic function; those in tissues and body fluids are associated with the monocyte-macrophage system and enhance the activity of immunoagents. The protein is Lysozyme C (LYZ) of Numida meleagris (Helmeted guineafowl).